The sequence spans 629 residues: Polyadenylate-binding protein, cytoplasmic and nuclear (629 aa).

The disordered stretch occupies residues 1 to 47 (MTLENKAEASPATKEETTTEAAPAEGEAKTESSEEKGSKEDQGDNAS). Residues 26–42 (GEAKTESSEEKGSKEDQ) show a composition bias toward basic and acidic residues. RRM domains lie at 46–124 (ASLY…WSQR), 134–211 (GNIY…PHVP), 227–304 (TNVF…RAKK), and 330–407 (VNLY…LAQR). The segment at 465–543 (GANPQMMMRP…RRKDGESRVA (79 aa)) is disordered. 2 stretches are compositionally biased toward low complexity: residues 493–506 (MYGAPPQGYQQGGF) and 514–531 (GGQPPRSGQPGPQGQFRG). A PABC domain is found at 542–624 (VADSISNALE…AITAYNEYLN (83 aa)).

This sequence belongs to the polyadenylate-binding protein type-1 family.

It localises to the cytoplasm. Its subcellular location is the nucleus. Binds the poly(A) tail of mRNA. Appears to be an important mediator of the multiple roles of the poly(A) tail in mRNA biogenesis, stability and translation. In the nucleus, involved in both mRNA cleavage and polyadenylation. Is also required for efficient mRNA export to the cytoplasm. Acts in concert with a poly(A)-specific nuclease (PAN) to affect poly(A) tail shortening, which may occur concomitantly with either nucleocytoplasmic mRNA transport or translational initiation. In the cytoplasm, stimulates translation initiation and regulates mRNA decay through translation termination-coupled poly(A) shortening, probably mediated by PAN. In Yarrowia lipolytica (strain CLIB 122 / E 150) (Yeast), this protein is Polyadenylate-binding protein, cytoplasmic and nuclear (PAB1).